The primary structure comprises 370 residues: MSEITHRTKTRPVKVGPLTIGGNNEVVIQSMTTTKTHDVEATVAEINRLAEAGCQIVRVACPDERAADAIPEIKKRISIPLVVDIHFNYKLALKAIEGGADKIRINPGNIGRREKVEAVVNAAKEKGIPIRIGVNAGSLEKRILEKYGYPTADGMVESALHHIKILEDLDFHDIIVSMKASDVNLAIEAYEKAAKAFDYPLHLGITESGTLFAGTVKSAAGLGAILSKGIGNTLRISLSADPVEEVKVARELLKSFGLASNAATLISCPTCGRIEIDLISIANEVEDYIAKIKAPIKVAVLGCAVNGPGEAREADIGIAGARGEGLLFRKGEIVRKVPEETMVEELKKEIDKLAEEHYAKQAAEKEKLNT.

Positions 268, 271, 303, and 310 each coordinate [4Fe-4S] cluster.

Belongs to the IspG family. [4Fe-4S] cluster serves as cofactor.

The enzyme catalyses (2E)-4-hydroxy-3-methylbut-2-enyl diphosphate + oxidized [flavodoxin] + H2O + 2 H(+) = 2-C-methyl-D-erythritol 2,4-cyclic diphosphate + reduced [flavodoxin]. It participates in isoprenoid biosynthesis; isopentenyl diphosphate biosynthesis via DXP pathway; isopentenyl diphosphate from 1-deoxy-D-xylulose 5-phosphate: step 5/6. In terms of biological role, converts 2C-methyl-D-erythritol 2,4-cyclodiphosphate (ME-2,4cPP) into 1-hydroxy-2-methyl-2-(E)-butenyl 4-diphosphate. The sequence is that of 4-hydroxy-3-methylbut-2-en-1-yl diphosphate synthase (flavodoxin) from Bacillus licheniformis (strain ATCC 14580 / DSM 13 / JCM 2505 / CCUG 7422 / NBRC 12200 / NCIMB 9375 / NCTC 10341 / NRRL NRS-1264 / Gibson 46).